Consider the following 1145-residue polypeptide: DNA polymerase II large subunit (1145 aa).

The disordered stretch occupies residues Lys-284–Pro-303.

It belongs to the archaeal DNA polymerase II family. As to quaternary structure, heterodimer of a large subunit and a small subunit.

It carries out the reaction DNA(n) + a 2'-deoxyribonucleoside 5'-triphosphate = DNA(n+1) + diphosphate. The catalysed reaction is Exonucleolytic cleavage in the 3'- to 5'-direction to yield nucleoside 5'-phosphates.. Functionally, possesses two activities: a DNA synthesis (polymerase) and an exonucleolytic activity that degrades single-stranded DNA in the 3'- to 5'-direction. Has a template-primer preference which is characteristic of a replicative DNA polymerase. In Methanococcoides burtonii (strain DSM 6242 / NBRC 107633 / OCM 468 / ACE-M), this protein is DNA polymerase II large subunit.